Consider the following 239-residue polypeptide: Transcriptional regulatory protein DcuR (239 aa).

The Response regulatory domain maps to 3–121 (NVLIIDDDAM…RFEEALTGWR (119 aa)). 4-aspartylphosphate is present on aspartate 56. The segment at residues 181-200 (TDELANEVNISRVSCRKYLI) is a DNA-binding region (H-T-H motif).

Phosphorylated and activated by DcuS.

Its subcellular location is the cytoplasm. Functionally, member of the two-component regulatory system DcuR/DcuS. Involved in the C4-dicarboxylate-stimulated regulation of the genes encoding the anaerobic fumarate respiratory system (frdABCD; nuoAN; dcuB; dcuC; sdhCDAB; etc.). Weakly regulates the aerobic C4-dicarboxylate transporter dctA. The protein is Transcriptional regulatory protein DcuR (dcuR) of Shigella flexneri.